We begin with the raw amino-acid sequence, 458 residues long: F-box/WD repeat-containing protein 9 (458 aa).

Residue methionine 1 is modified to N-acetylmethionine. Disordered regions lie at residues 1-30 (MELP…DAQA) and 42-64 (KSGL…SASE). A compositionally biased stretch (acidic residues) spans 16–26 (DDSDPESETDP). Position 18 is a phosphoserine (serine 18). Threonine 55 is modified (phosphothreonine). Serine 59 carries the post-translational modification Phosphoserine. Residues 76-123 (EPGLLSLPPELLLEICSYLDARLVLHVLSRVCHALRDLVSDHVTWRLR) enclose the F-box domain. WD repeat units follow at residues 171–210 (GHVA…TESN), 220–261 (KRNS…QQFG), 264–301 (KASS…ALLK), 305–342 (LHSR…VLQR), 344–381 (QLDS…FQLI), 387–424 (GHSF…RTIC), and 427–458 (RHDN…RLQA).

In terms of assembly, interacts with SKP1 and CUL1.

Functionally, substrate-recognition component of the SCF (SKP1-CUL1-F-box protein)-type E3 ubiquitin ligase complex. In Homo sapiens (Human), this protein is F-box/WD repeat-containing protein 9 (FBXW9).